We begin with the raw amino-acid sequence, 308 residues long: Transcription factor JunB (308 aa).

The segment at 229–256 is basic motif; that stretch reads RIKAERKRLRNRLAATKCRKRKLERISR. A bZIP domain is found at 229 to 292; it reads RIKAERKRLR…AQLKQKVLRH (64 aa). A leucine-zipper region spans residues 257-285; that stretch reads LEEKVKVLKNDNAGLSNTASVLRDQVAQL.

This sequence belongs to the bZIP family. Jun subfamily. Binds DNA as a homodimer or as a heterodimer with another member of the jun/fos family.

The protein resides in the nucleus. Functionally, transcription factor involved in regulating gene activity following the primary growth factor response. Binds to the DNA sequence 5'-TGA[CG]TCA-3'. This is Transcription factor JunB (junb) from Cyprinus carpio (Common carp).